The following is a 383-amino-acid chain: Acetyl-CoA acetyltransferase (383 aa).

The active-site Acyl-thioester intermediate is the cysteine 85. Residues cysteine 206, serine 207, isoleucine 209, and lysine 328 each coordinate CoA. Histidine 332 acts as the Proton acceptor in catalysis.

Belongs to the thiolase-like superfamily. Thiolase family. As to quaternary structure, interacts with HMG-CoA synthase (HMGCS) that catalyzes the second step in the pathway and with a DUF35 protein. The acetoacetyl-CoA thiolase/HMG-CoA synthase complex channels the intermediate via a fused CoA-binding site, which allows for efficient coupling of the endergonic thiolase reaction with the exergonic HMGCS reaction.

It catalyses the reaction 2 acetyl-CoA = acetoacetyl-CoA + CoA. The protein operates within metabolic intermediate biosynthesis; (R)-mevalonate biosynthesis; (R)-mevalonate from acetyl-CoA: step 1/3. Catalyzes the condensation of two acetyl-coA molecules into acetoacetyl-CoA. Functions in the mevalonate (MVA) pathway leading to isopentenyl diphosphate (IPP), a key precursor for the biosynthesis of isoprenoid compounds that are building blocks of archaeal membrane lipids. In Methanothermobacter thermautotrophicus (strain ATCC 29096 / DSM 1053 / JCM 10044 / NBRC 100330 / Delta H) (Methanobacterium thermoautotrophicum), this protein is Acetyl-CoA acetyltransferase.